The chain runs to 572 residues: 2-isopropylmalate synthase (572 aa).

Residues 39–313 enclose the Pyruvate carboxyltransferase domain; that stretch reads PVWMSTDLRD…HPGLDFSRIN (275 aa). The Mg(2+) site is built by Asp-48, His-252, His-254, and Asn-288. The interval 445 to 572 is regulatory domain; sequence VAAPYAYVEH…GVGRQVAATR (128 aa).

This sequence belongs to the alpha-IPM synthase/homocitrate synthase family. LeuA type 2 subfamily. Homodimer. It depends on Mg(2+) as a cofactor.

Its subcellular location is the cytoplasm. It carries out the reaction 3-methyl-2-oxobutanoate + acetyl-CoA + H2O = (2S)-2-isopropylmalate + CoA + H(+). It functions in the pathway amino-acid biosynthesis; L-leucine biosynthesis; L-leucine from 3-methyl-2-oxobutanoate: step 1/4. Its function is as follows. Catalyzes the condensation of the acetyl group of acetyl-CoA with 3-methyl-2-oxobutanoate (2-ketoisovalerate) to form 3-carboxy-3-hydroxy-4-methylpentanoate (2-isopropylmalate). The polypeptide is 2-isopropylmalate synthase (Azoarcus sp. (strain BH72)).